The chain runs to 253 residues: Tryptophan synthase alpha chain (253 aa).

Residues Glu-47 and Asp-58 each act as proton acceptor in the active site.

It belongs to the TrpA family. As to quaternary structure, tetramer of two alpha and two beta chains.

It carries out the reaction (1S,2R)-1-C-(indol-3-yl)glycerol 3-phosphate + L-serine = D-glyceraldehyde 3-phosphate + L-tryptophan + H2O. Its pathway is amino-acid biosynthesis; L-tryptophan biosynthesis; L-tryptophan from chorismate: step 5/5. The alpha subunit is responsible for the aldol cleavage of indoleglycerol phosphate to indole and glyceraldehyde 3-phosphate. This is Tryptophan synthase alpha chain from Lactococcus lactis subsp. cremoris (strain MG1363).